Here is an 844-residue protein sequence, read N- to C-terminus: MEVPSYFDPDYDPSSLRVVDLRNILTEYQIYYPSTAKKAQLITLFSKLRRAKNGLISMTELQQKNVPPSSRSPRRRVAGVTNNVTARISSKRKINMVDEANDTEISKTSQFEDNVMGMLQDENVQVLNTNTITISEESEFHASKIAKIDSRNEEITHIPFETQTELNAAVVNLDNSMESSFSIVQNLTNKDSSVDTATYDFSAEVGNIVTPASKFLDYDQSYLVNASVSGDPTPVKVLNTTSPKSENPLNQSSFLSFLGENLKPKFTSRSSSVYASPIKSSLNSLECNPSNLLSVRKNFQQSSDSYLKSNKSFDQLNNLVGLSTGNSENFTPENNSFSWTHPKKNSSSPLPQSQSSSIFVEHLNQLYEANASIHRPVNPAFSTNFGLEASNTSTPEKKKFDSQKPDDDSVNEISSDLGLSTTGIDRVEENISLTKDRQPKRPYFSLGSFISLIFSFTKVVNSLWLVLLVVPLLGFVGFWHQEVQRVGFCGVPAEPYPSSLYYLQPGVLRSSIESAYSFAHSLGIEASCQPCPENAECGFNRQLFCKEGLKASFPLLADFGLKPYPRCIPNTVKVNKVEEMVQAFMSIIGKWYYKAPKEFATFESAKNLNGKSFVDNFKDRYYMYKQDIDNVVGLKDFKVYLKTTLNRLYNSKLTRKVLYYLFSPLFTLELWKLRVRGALSKFPTNCLRSVYSHTVSLMKYLTSAVISCWRIYLLIGILAAITGTVVWRIRVYAKKHVVKHGVSVCVSHCIAKLQKTKLKSLTDFSVNPRVEVVQLRSDCFVSGVADDKGLFELVHLPLSIQLEIWEKVVSVLEGMVSVKVWDSERLAKNRAWEWIGVFSDDIAL.

Disordered regions lie at residues 333–354 and 384–415; these read ENNSFSWTHPKKNSSSPLPQSQ and NFGLEASNTSTPEKKKFDSQKPDDDSVNEISS. Polar residues predominate over residues 384–394; it reads NFGLEASNTST. The segment covering 395–407 has biased composition (basic and acidic residues); that stretch reads PEKKKFDSQKPDD. The helical transmembrane segment at 459-479 threads the bilayer; sequence VVNSLWLVLLVVPLLGFVGFW. 605-612 contacts ATP; sequence AKNLNGKS. The chain crosses the membrane as a helical span at residues 705-725; that stretch reads VISCWRIYLLIGILAAITGTV.

Interacts with sad1.

The protein resides in the endoplasmic reticulum membrane. Its subcellular location is the nucleus membrane. Functionally, required for correct meiotic chromosome segregation. The sequence is that of Meiotically up-regulated gene 61 protein (mug61) from Schizosaccharomyces pombe (strain 972 / ATCC 24843) (Fission yeast).